The chain runs to 186 residues: uncharacterized protein (186 aa).

This sequence to M.jannaschii MJ0208.

This is an uncharacterized protein from Methanocaldococcus jannaschii (strain ATCC 43067 / DSM 2661 / JAL-1 / JCM 10045 / NBRC 100440) (Methanococcus jannaschii).